Consider the following 202-residue polypeptide: Secreted RxLR effector protein 93 (202 aa).

Positions 1 to 16 (MRFYLTKLFAAAGALA) are cleaved as a signal peptide. A disordered region spans residues 29 to 58 (TPVSPLSRSSDHHQSDDSTQRRLRTLNGAD). The segment covering 37 to 48 (SSDHHQSDDSTQ) has biased composition (basic and acidic residues). A RxLR-dEER motif is present at residues 49–61 (RRLRTLNGADEER).

It belongs to the RxLR effector family.

The protein resides in the secreted. It is found in the host nucleus. Secreted effector that completely suppresses the host cell death induced by cell death-inducing proteins. The sequence is that of Secreted RxLR effector protein 93 from Plasmopara viticola (Downy mildew of grapevine).